A 128-amino-acid polypeptide reads, in one-letter code: SH2 domain-containing protein 1A (128 aa).

The region spanning 6-102 is the SH2 domain; that stretch reads VYHGKISRET…GIVIPLQYPV (97 aa). The interaction with FYN SH3 domain stretch occupies residues 67 to 92; the sequence is DTAPGVHKRFFRKIKNLISAFQKPDQ. K89 carries the N6-acetyllysine modification. A disordered region spans residues 103–128; it reads EKKSSARSTQGATGRREDPDVFLKTP. Basic and acidic residues predominate over residues 116–128; it reads GRREDPDVFLKTP.

As to quaternary structure, interacts with CD84, CD244, LY9, SLAMF1 and FYN. Interacts with NTRK1, NTRK2 and NTRK3.

Its subcellular location is the cytoplasm. Its function is as follows. Cytoplasmic adapter regulating receptors of the signaling lymphocytic activation molecule (SLAM) family such as SLAMF1, CD244, LY9, CD84, SLAMF6 and SLAMF7. In SLAM signaling seems to cooperate with SH2D1B/EAT-2. Initially it has been proposed that association with SLAMF1 prevents SLAMF1 binding to inhibitory effectors including INPP5D/SHIP1 and PTPN11/SHP-2. However, by simultaneous interactions, recruits FYN which subsequently phosphorylates and activates SLAMF1. Positively regulates CD244/2B4- and CD84-mediated natural killer (NK) cell functions. Can also promote CD48-, SLAMF6 -, LY9-, and SLAMF7-mediated NK cell activation. In the context of NK cell-mediated cytotoxicity enhances conjugate formation with target cells. May also regulate the activity of the neurotrophin receptors NTRK1, NTRK2 and NTRK3. This Sus scrofa (Pig) protein is SH2 domain-containing protein 1A (SH2D1A).